The primary structure comprises 188 residues: CXXC-type zinc finger protein 4 (188 aa).

The disordered stretch occupies residues Met-1–Gln-20. The CXXC-type zinc finger occupies Ala-122–Glu-163. Residues Cys-129, Cys-132, Cys-135, Cys-141, Cys-144, Cys-147, Cys-157, and Cys-162 each coordinate Zn(2+).

It is found in the cytoplasm. Its function is as follows. Acts as a negative regulator of the Wnt signaling pathway required for anterior neural structure formation. Binds preferentially to DNA containing cytidine-phosphate-guanosine (CpG) dinucleotides over CpH (H=A, T, and C), hemimethylated-CpG and hemimethylated-hydroxymethyl-CpG. This is CXXC-type zinc finger protein 4 (cxxc4) from Xenopus tropicalis (Western clawed frog).